Here is a 635-residue protein sequence, read N- to C-terminus: DNA mismatch repair protein MutL (635 aa).

The disordered stretch occupies residues 352–380 (KAALQRGWVPPGAGRPGEGGGRAAPPPWR).

It belongs to the DNA mismatch repair MutL/HexB family.

This protein is involved in the repair of mismatches in DNA. It is required for dam-dependent methyl-directed DNA mismatch repair. May act as a 'molecular matchmaker', a protein that promotes the formation of a stable complex between two or more DNA-binding proteins in an ATP-dependent manner without itself being part of a final effector complex. This chain is DNA mismatch repair protein MutL, found in Symbiobacterium thermophilum (strain DSM 24528 / JCM 14929 / IAM 14863 / T).